The primary structure comprises 475 residues: Ribulose bisphosphate carboxylase large chain (475 aa).

Positions 1 to 2 (MS) are excised as a propeptide. An N-acetylproline modification is found at Pro-3. Residue Lys-14 is modified to N6,N6,N6-trimethyllysine. Positions 123 and 173 each coordinate substrate. The Proton acceptor role is filled by Lys-175. Lys-177 contacts substrate. Lys-201, Asp-203, and Glu-204 together coordinate Mg(2+). N6-carboxylysine is present on Lys-201. The active-site Proton acceptor is the His-294. Substrate-binding residues include Arg-295, His-327, and Ser-379.

The protein belongs to the RuBisCO large chain family. Type I subfamily. In terms of assembly, heterohexadecamer of 8 large chains and 8 small chains; disulfide-linked. The disulfide link is formed within the large subunit homodimers. It depends on Mg(2+) as a cofactor. The disulfide bond which can form in the large chain dimeric partners within the hexadecamer appears to be associated with oxidative stress and protein turnover.

The protein resides in the plastid. Its subcellular location is the chloroplast. It carries out the reaction 2 (2R)-3-phosphoglycerate + 2 H(+) = D-ribulose 1,5-bisphosphate + CO2 + H2O. It catalyses the reaction D-ribulose 1,5-bisphosphate + O2 = 2-phosphoglycolate + (2R)-3-phosphoglycerate + 2 H(+). In terms of biological role, ruBisCO catalyzes two reactions: the carboxylation of D-ribulose 1,5-bisphosphate, the primary event in carbon dioxide fixation, as well as the oxidative fragmentation of the pentose substrate in the photorespiration process. Both reactions occur simultaneously and in competition at the same active site. The protein is Ribulose bisphosphate carboxylase large chain of Pinus pinea (Italian stone pine).